We begin with the raw amino-acid sequence, 344 residues long: Lipase chaperone (344 aa).

Residues 14–34 form a helical membrane-spanning segment; it reads AAIYGVVGLAAIAGVAMWSGA.

The protein belongs to the lipase chaperone family.

Its subcellular location is the cell inner membrane. May be involved in the folding of the extracellular lipase during its passage through the periplasm. In Burkholderia cenocepacia (strain HI2424), this protein is Lipase chaperone.